We begin with the raw amino-acid sequence, 173 residues long: Shikimate kinase (173 aa).

Residue 11-16 coordinates ATP; sequence GAGKTT. T15 lines the Mg(2+) pocket. The substrate site is built by D33, R57, and G79. R118 contributes to the ATP binding site. R140 is a binding site for substrate.

The protein belongs to the shikimate kinase family. In terms of assembly, monomer. Requires Mg(2+) as cofactor.

Its subcellular location is the cytoplasm. The enzyme catalyses shikimate + ATP = 3-phosphoshikimate + ADP + H(+). The protein operates within metabolic intermediate biosynthesis; chorismate biosynthesis; chorismate from D-erythrose 4-phosphate and phosphoenolpyruvate: step 5/7. Catalyzes the specific phosphorylation of the 3-hydroxyl group of shikimic acid using ATP as a cosubstrate. In Parabacteroides distasonis (strain ATCC 8503 / DSM 20701 / CIP 104284 / JCM 5825 / NCTC 11152), this protein is Shikimate kinase.